Here is a 431-residue protein sequence, read N- to C-terminus: MSSIEPWPAPFAPTPVHATVTVPGSKSQTNRTLVLAALAAAQGQGSSTITGALRSRDTDLMIEALQTLGLRVDGTGSELTVSGRIRPGPEARVDCGLAGTVLRFVPPLAALSAAPITFDGDEQARARPIAPLLDALRGLGVPVDGAGLPFRVQGTGSVAGGTVAIDASASSQFVSGLLLSGASFTDGLTVQHTGSELPSAPHIAMTVQMLRQAGVDVDDSIPNRWLVRPGALRPRHWDVEPDLTNAVAFLAAAVVTGGTVTITGWPADSVQPAKNILDILQTLNSTVRHIDSCLQVQGPQTYRGFDVDLRDVGELTPSVAALAALASPGSVSRLAGIAHLRGHETDRLAALSTEINRLGGNCEQTSDGLVITATPLRPGSWRAYADHRMAMAGAIVGLRVAGVEVDDIGATSKTLPEFPQLWTEMVEGSSG.

3-phosphoshikimate-binding residues include K26, S27, and R31. K26 provides a ligand contact to phosphoenolpyruvate. The phosphoenolpyruvate site is built by G99 and R127. Residues S170, S171, Q172, S199, E314, and H343 each contribute to the 3-phosphoshikimate site. Q172 serves as a coordination point for phosphoenolpyruvate. E314 serves as the catalytic Proton acceptor. Positions 347, 388, and 413 each coordinate phosphoenolpyruvate.

This sequence belongs to the EPSP synthase family. In terms of assembly, monomer.

Its subcellular location is the cytoplasm. It catalyses the reaction 3-phosphoshikimate + phosphoenolpyruvate = 5-O-(1-carboxyvinyl)-3-phosphoshikimate + phosphate. The protein operates within metabolic intermediate biosynthesis; chorismate biosynthesis; chorismate from D-erythrose 4-phosphate and phosphoenolpyruvate: step 6/7. Functionally, catalyzes the transfer of the enolpyruvyl moiety of phosphoenolpyruvate (PEP) to the 5-hydroxyl of shikimate-3-phosphate (S3P) to produce enolpyruvyl shikimate-3-phosphate and inorganic phosphate. The protein is 3-phosphoshikimate 1-carboxyvinyltransferase of Mycobacterium marinum (strain ATCC BAA-535 / M).